We begin with the raw amino-acid sequence, 238 residues long: Chromosome partition protein MukE (238 aa).

Residues 206–238 form a disordered region; sequence EESSQSSFDLDENEKLSDISAEEQHELELEGDA. Residues 218–238 show a composition bias toward basic and acidic residues; sequence NEKLSDISAEEQHELELEGDA.

It belongs to the MukE family. In terms of assembly, interacts, and probably forms a ternary complex, with MukF and MukB. The complex formation is stimulated by calcium or magnesium.

The protein resides in the cytoplasm. The protein localises to the nucleoid. In terms of biological role, involved in chromosome condensation, segregation and cell cycle progression. May participate in facilitating chromosome segregation by condensation DNA from both sides of a centrally located replisome during cell division. Probably acts via its interaction with MukB and MukF. The protein is Chromosome partition protein MukE of Aliivibrio salmonicida (strain LFI1238) (Vibrio salmonicida (strain LFI1238)).